A 492-amino-acid polypeptide reads, in one-letter code: Gamma-aminobutyric acid receptor subunit alpha-3 (492 aa).

An N-terminal signal peptide occupies residues methionine 1–glycine 28. Over glutamine 29–lysine 274 the chain is Extracellular. An N-linked (GlcNAc...) asparagine glycan is attached at asparagine 63. Arginine 119 is a binding site for 4-aminobutanoate. 2 N-linked (GlcNAc...) asparagine glycosylation sites follow: asparagine 163 and asparagine 176. Residue threonine 182 coordinates 4-aminobutanoate. The cysteines at positions 191 and 205 are disulfide-linked. Asparagine 228 is a glycosylation site (N-linked (GlcNAc...) asparagine). Residues isoleucine 275–valine 295 traverse the membrane as a helical segment. Residues serine 296–proline 305 lie on the Cytoplasmic side of the membrane. A helical transmembrane segment spans residues alanine 306–alanine 325. Residues arginine 326–threonine 336 are Extracellular-facing. Residues alanine 337 to alanine 357 form a helical membrane-spanning segment. The Cytoplasmic portion of the chain corresponds to threonine 358 to lysine 457. A Phosphoserine modification is found at serine 426. At threonine 427 the chain carries Phosphothreonine. Serine 433 is modified (phosphoserine). Residues isoleucine 458–tyrosine 478 form a helical membrane-spanning segment. Residues valine 479–glutamine 492 are Extracellular-facing.

This sequence belongs to the ligand-gated ion channel (TC 1.A.9) family. Gamma-aminobutyric acid receptor (TC 1.A.9.5) subfamily. GABRA3 sub-subfamily. In terms of assembly, heteropentamer, formed by a combination of alpha (GABRA1-6), beta (GABRB1-3), gamma (GABRG1-3), delta (GABRD), epsilon (GABRE), rho (GABRR1-3), pi (GABRP) and theta (GABRQ) chains, each subunit exhibiting distinct physiological and pharmacological properties. Binds UBQLN1. Interacts with GPHN.

The protein localises to the postsynaptic cell membrane. The protein resides in the cell membrane. The catalysed reaction is chloride(in) = chloride(out). Alpha subunit of the heteropentameric ligand-gated chloride channel gated by gamma-aminobutyric acid (GABA), a major inhibitory neurotransmitter in the brain. GABA-gated chloride channels, also named GABA(A) receptors (GABAAR), consist of five subunits arranged around a central pore and contain GABA active binding site(s) located at the alpha and beta subunit interface(s). When activated by GABA, GABAARs selectively allow the flow of chloride anions across the cell membrane down their electrochemical gradient. Chloride influx into the postsynaptic neuron following GABAAR opening decreases the neuron ability to generate a new action potential, thereby reducing nerve transmission. The polypeptide is Gamma-aminobutyric acid receptor subunit alpha-3 (GABRA3) (Bos taurus (Bovine)).